A 165-amino-acid chain; its full sequence is Endoribonuclease YbeY (165 aa).

Zn(2+) is bound by residues His-130, His-134, and His-140.

The protein belongs to the endoribonuclease YbeY family. Zn(2+) is required as a cofactor.

The protein localises to the cytoplasm. Functionally, single strand-specific metallo-endoribonuclease involved in late-stage 70S ribosome quality control and in maturation of the 3' terminus of the 16S rRNA. The sequence is that of Endoribonuclease YbeY from Streptococcus pneumoniae serotype 2 (strain D39 / NCTC 7466).